We begin with the raw amino-acid sequence, 966 residues long: Integrator complex subunit 7 (966 aa).

2 positions are modified to phosphoserine: Ser338 and Ser809. The tract at residues 941-966 (LQQQAQQPLQPQPLPQPQPRSAYTRF) is disordered.

This sequence belongs to the Integrator subunit 7 family. As to quaternary structure, component of the Integrator complex, composed of core subunits INTS1, INTS2, INTS3, INTS4, INTS5, INTS6, INTS7, INTS8, INTS9/RC74, INTS10, INTS11/CPSF3L, INTS12, INTS13, INTS14 and INTS15. The core complex associates with protein phosphatase 2A subunits PPP2CA and PPP2R1A, to form the Integrator-PP2A (INTAC) complex. Interacts with NABP2.

Its subcellular location is the nucleus. It localises to the chromosome. The protein resides in the cytoplasm. Functionally, component of the integrator complex, a multiprotein complex that terminates RNA polymerase II (Pol II) transcription in the promoter-proximal region of genes. The integrator complex provides a quality checkpoint during transcription elongation by driving premature transcription termination of transcripts that are unfavorably configured for transcriptional elongation: the complex terminates transcription by (1) catalyzing dephosphorylation of the C-terminal domain (CTD) of Pol II subunit POLR2A/RPB1 and SUPT5H/SPT5, (2) degrading the exiting nascent RNA transcript via endonuclease activity and (3) promoting the release of Pol II from bound DNA. The integrator complex is also involved in terminating the synthesis of non-coding Pol II transcripts, such as enhancer RNAs (eRNAs), small nuclear RNAs (snRNAs), telomerase RNAs and long non-coding RNAs (lncRNAs). May be not involved in the recruitment of cytoplasmic dynein to the nuclear envelope by different components of the INT complex. Plays a role in DNA damage response (DDR) signaling during the S phase. The chain is Integrator complex subunit 7 (Ints7) from Mus musculus (Mouse).